Here is a 55-residue protein sequence, read N- to C-terminus: MPQLNPAPWFAILVFSWLVFLTVIPPKVLGHIFTNEPTSQSTEKTKPEPWNWPWH.

Residues 4–24 (LNPAPWFAILVFSWLVFLTVI) traverse the membrane as a helical segment. The tract at residues 36-55 (EPTSQSTEKTKPEPWNWPWH) is disordered.

This sequence belongs to the ATPase protein 8 family. In terms of assembly, component of the ATP synthase complex composed at least of ATP5F1A/subunit alpha, ATP5F1B/subunit beta, ATP5MC1/subunit c (homooctomer), MT-ATP6/subunit a, MT-ATP8/subunit 8, ATP5ME/subunit e, ATP5MF/subunit f, ATP5MG/subunit g, ATP5MK/subunit k, ATP5MJ/subunit j, ATP5F1C/subunit gamma, ATP5F1D/subunit delta, ATP5F1E/subunit epsilon, ATP5PF/subunit F6, ATP5PB/subunit b, ATP5PD/subunit d, ATP5PO/subunit OSCP. ATP synthase complex consists of a soluble F(1) head domain (subunits alpha(3) and beta(3)) - the catalytic core - and a membrane F(0) domain - the membrane proton channel (subunits c, a, 8, e, f, g, k and j). These two domains are linked by a central stalk (subunits gamma, delta, and epsilon) rotating inside the F1 region and a stationary peripheral stalk (subunits F6, b, d, and OSCP).

It localises to the mitochondrion membrane. Subunit 8, of the mitochondrial membrane ATP synthase complex (F(1)F(0) ATP synthase or Complex V) that produces ATP from ADP in the presence of a proton gradient across the membrane which is generated by electron transport complexes of the respiratory chain. ATP synthase complex consist of a soluble F(1) head domain - the catalytic core - and a membrane F(1) domain - the membrane proton channel. These two domains are linked by a central stalk rotating inside the F(1) region and a stationary peripheral stalk. During catalysis, ATP synthesis in the catalytic domain of F(1) is coupled via a rotary mechanism of the central stalk subunits to proton translocation. In vivo, can only synthesize ATP although its ATP hydrolase activity can be activated artificially in vitro. Part of the complex F(0) domain. This Salvelinus alpinus (Arctic char) protein is ATP synthase F(0) complex subunit 8.